We begin with the raw amino-acid sequence, 67 residues long: MPGVYLNDDEYNFDIALRRFKKQVEKAGVLSEMKKRQHYEKPSVMRKKKKAAARKRLLKKIRKMNMA.

It belongs to the bacterial ribosomal protein bS21 family.

In Nitratidesulfovibrio vulgaris (strain DSM 19637 / Miyazaki F) (Desulfovibrio vulgaris), this protein is Small ribosomal subunit protein bS21.